Consider the following 432-residue polypeptide: Adenylosuccinate synthetase (432 aa).

Residues 13-19 and 41-43 each bind GTP; these read GDEGKGK and GHT. Asp14 acts as the Proton acceptor in catalysis. Residues Asp14 and Gly41 each contribute to the Mg(2+) site. Residues 14–17, 39–42, Thr130, Arg144, Gln225, Thr240, and Arg304 contribute to the IMP site; these read DEGK and NAGH. His42 functions as the Proton donor in the catalytic mechanism. 300 to 306 is a substrate binding site; the sequence is ATTGRRR. GTP-binding positions include Arg306, 332 to 334, and 415 to 417; these read KLD and STG.

Belongs to the adenylosuccinate synthetase family. As to quaternary structure, homodimer. It depends on Mg(2+) as a cofactor.

The protein resides in the cytoplasm. The enzyme catalyses IMP + L-aspartate + GTP = N(6)-(1,2-dicarboxyethyl)-AMP + GDP + phosphate + 2 H(+). It functions in the pathway purine metabolism; AMP biosynthesis via de novo pathway; AMP from IMP: step 1/2. Plays an important role in the de novo pathway of purine nucleotide biosynthesis. Catalyzes the first committed step in the biosynthesis of AMP from IMP. The sequence is that of Adenylosuccinate synthetase from Salmonella typhi.